Consider the following 175-residue polypeptide: NADH-quinone oxidoreductase subunit I (175 aa).

4Fe-4S ferredoxin-type domains lie at Lys-69–Ala-98 and Lys-115–Pro-144. Residues Cys-78, Cys-81, Cys-84, Cys-88, Cys-124, Cys-127, Cys-130, and Cys-134 each coordinate [4Fe-4S] cluster.

The protein belongs to the complex I 23 kDa subunit family. NDH-1 is composed of 14 different subunits. Subunits NuoA, H, J, K, L, M, N constitute the membrane sector of the complex. Requires [4Fe-4S] cluster as cofactor.

It localises to the cell inner membrane. The enzyme catalyses a quinone + NADH + 5 H(+)(in) = a quinol + NAD(+) + 4 H(+)(out). NDH-1 shuttles electrons from NADH, via FMN and iron-sulfur (Fe-S) centers, to quinones in the respiratory chain. The immediate electron acceptor for the enzyme in this species is believed to be ubiquinone. Couples the redox reaction to proton translocation (for every two electrons transferred, four hydrogen ions are translocated across the cytoplasmic membrane), and thus conserves the redox energy in a proton gradient. This is NADH-quinone oxidoreductase subunit I from Leptospira interrogans serogroup Icterohaemorrhagiae serovar Lai (strain 56601).